We begin with the raw amino-acid sequence, 104 residues long: Vegetative-specific protein H7 (104 aa).

In terms of domain architecture, HTH cro/C1-type spans 43 to 97; the sequence is IQRARNALKMTQKELAFKINERPGVINEYESGSAIPSQAVLSKLEKALNVKLRGK. The segment at residues 54 to 73 is a DNA-binding region (H-T-H motif); that stretch reads QKELAFKINERPGVINEYES.

This is Vegetative-specific protein H7 (cinD-1) from Dictyostelium discoideum (Social amoeba).